A 152-amino-acid polypeptide reads, in one-letter code: Catabolic 3-dehydroquinase (152 aa).

Catalysis depends on Tyr-24, which acts as the Proton acceptor. Residues Asn-75, His-81, and Asp-88 each coordinate substrate. The active-site Proton donor is His-101. Residues 102–103 and Arg-112 each bind substrate; that span reads IS.

Belongs to the type-II 3-dehydroquinase family. In terms of assembly, homododecamer. Adopts a ring-like structure, composed of an arrangement of two hexameric rings stacked on top of one another.

It catalyses the reaction 3-dehydroquinate = 3-dehydroshikimate + H2O. It participates in aromatic compound metabolism; 3,4-dihydroxybenzoate biosynthesis; 3,4-dihydroxybenzoate from 3-dehydroquinate: step 1/2. In terms of biological role, is involved in the catabolism of quinate. Allows the utilization of quinate as carbon source via the beta-ketoadipate pathway. The sequence is that of Catabolic 3-dehydroquinase from Phaeosphaeria nodorum (strain SN15 / ATCC MYA-4574 / FGSC 10173) (Glume blotch fungus).